Reading from the N-terminus, the 184-residue chain is Large ribosomal subunit protein uL6 (184 aa).

Belongs to the universal ribosomal protein uL6 family. Part of the 50S ribosomal subunit.

Its function is as follows. This protein binds to the 23S rRNA, and is important in its secondary structure. It is located near the subunit interface in the base of the L7/L12 stalk, and near the tRNA binding site of the peptidyltransferase center. This Thermococcus kodakarensis (strain ATCC BAA-918 / JCM 12380 / KOD1) (Pyrococcus kodakaraensis (strain KOD1)) protein is Large ribosomal subunit protein uL6.